The primary structure comprises 44 residues: Protein PsbN (44 aa).

The chain crosses the membrane as a helical span at residues 6–26 (FFFTLFLWFFLLSITIYSIYI).

It belongs to the PsbN family.

It is found in the plastid. The protein resides in the chloroplast thylakoid membrane. Its function is as follows. May play a role in photosystem I and II biogenesis. This chain is Protein PsbN, found in Oedogonium cardiacum (Filamentous green alga).